A 212-amino-acid polypeptide reads, in one-letter code: MADLFAPAPEPSTELGRLRVLSKSAGIRVSPLILGGMSIGDAWSEILGSMSKERAFELLDAFYEAGGNFIDTANNYQNEQSEAWIGEWMVSRKLRDQIVIATKFTTDYKKYDVGGGKSANYCGNHKRSLHVSVRDSLRKLQTDWIDILYVHWWDYMSSIEEVMDSLHILVQQARSSIWVCLIRLPGLFLRQITTLNLMVKPLLASIKVNGTC.

Y76 serves as the catalytic Proton donor.

The protein belongs to the aldo/keto reductase family. Aldo/keto reductase 2 subfamily.

This Saccharomyces cerevisiae (strain ATCC 204508 / S288c) (Baker's yeast) protein is Putative aryl-alcohol dehydrogenase AAD6.